A 317-amino-acid polypeptide reads, in one-letter code: Glycerol-3-phosphate dehydrogenase [NAD(P)+] (317 aa).

S14, F15, R35, and K109 together coordinate NADPH. Sn-glycerol 3-phosphate contacts are provided by K109 and G137. A141 serves as a coordination point for NADPH. The sn-glycerol 3-phosphate site is built by K192, D248, S258, R259, and N260. K192 functions as the Proton acceptor in the catalytic mechanism. Residue R259 coordinates NADPH. 2 residues coordinate NADPH: L283 and E285.

The protein belongs to the NAD-dependent glycerol-3-phosphate dehydrogenase family.

It is found in the cytoplasm. The enzyme catalyses sn-glycerol 3-phosphate + NAD(+) = dihydroxyacetone phosphate + NADH + H(+). It carries out the reaction sn-glycerol 3-phosphate + NADP(+) = dihydroxyacetone phosphate + NADPH + H(+). It participates in membrane lipid metabolism; glycerophospholipid metabolism. In terms of biological role, catalyzes the reduction of the glycolytic intermediate dihydroxyacetone phosphate (DHAP) to sn-glycerol 3-phosphate (G3P), the key precursor for phospholipid synthesis. This is Glycerol-3-phosphate dehydrogenase [NAD(P)+] from Rickettsia akari (strain Hartford).